The sequence spans 923 residues: Neuropilin-1 (923 aa).

Residues 1–21 (MERGLPLLCATLALALALAGA) form the signal peptide. At 22–856 (FRSDKCGGTI…PGNVLKTLDP (835 aa)) the chain is on the extracellular side. Disulfide bonds link C27–C54, C82–C104, and C147–C173. 2 consecutive CUB domains span residues 27-141 (CGGT…YEIF) and 147-265 (CSQN…YSVL). N150 carries N-linked (GlcNAc...) asparagine glycosylation. 3 residues coordinate Ca(2+): E195, D209, and D250. C206 and C228 are oxidised to a cystine. N-linked (GlcNAc...) asparagine glycans are attached at residues N261, N300, and N522. Intrachain disulfides connect C275–C424 and C431–C583. 2 consecutive F5/8 type C domains span residues 275-424 (CMEA…VYGC) and 431-583 (CSGM…LLGC). S612 carries an O-linked (Xyl...) (chondroitin sulfate) serine; alternate glycan. A glycan (O-linked (Xyl...) (heparan sulfate) serine; alternate) is linked at S612. One can recognise an MAM domain in the interval 645 to 811 (TYGFNCEFGW…NHISQEDCAK (167 aa)). The disordered stretch occupies residues 820–845 (TEIKIDETGSTPGYEGEGEGDKNISR). Residue S829 is glycosylated (O-linked (Xyl...) (chondroitin sulfate) serine). Residue N842 is glycosylated (N-linked (GlcNAc...) asparagine). A helical membrane pass occupies residues 857-879 (ILITIIAMSALGVLLGAVCGVVL). Residues 880-923 (YCACWHNGMSERNLSALENYNFELVDGVKLKKDKLNPQSNYSEA) are Cytoplasmic-facing. The residue at position 894 (S894) is a Phosphoserine.

The protein belongs to the neuropilin family. As to quaternary structure, homodimer, and heterodimer with NRP2. Binds PLXNB1. Interacts with FER. Interacts with VEGFA. Interacts with ABCB8/MITOSUR in mitochondria. In terms of tissue distribution, nervous system.

The protein localises to the mitochondrion membrane. The protein resides in the cell membrane. Its subcellular location is the cytoplasm. In terms of biological role, receptor involved in the development of the cardiovascular system, in angiogenesis, in the formation of certain neuronal circuits and in organogenesis outside the nervous system. Mediates the chemorepulsant activity of semaphorins. Recognizes a C-end rule (CendR) motif R/KXXR/K on its ligands which causes cellular internalization and vascular leakage. Binds to semaphorin 3A (SEMA3A), the PLGF-2 isoform of PGF, the VEGF165 isoform of VEGFA and VEGFB. Coexpression with KDR results in increased VEGF165 binding to KDR as well as increased chemotaxis. Regulates VEGF-induced angiogenesis. Binding to VEGFA initiates a signaling pathway needed for motor neuron axon guidance and cell body migration, including for the caudal migration of facial motor neurons from rhombomere 4 to rhombomere 6 during embryonic development. Regulates mitochondrial iron transport via interaction with ABCB8/MITOSUR. The sequence is that of Neuropilin-1 from Mus musculus (Mouse).